Consider the following 525-residue polypeptide: Arylsulfatase G (525 aa).

The signal sequence occupies residues 1 to 16; sequence MGWLFLKVLLAGVSFS. Ca(2+) contacts are provided by D44, D45, and C84. Residue C84 is the Nucleophile of the active site. Position 84 is a 3-oxoalanine (Cys) (C84). N117 carries an N-linked (GlcNAc...) asparagine glycan. K137 is a substrate binding site. The active site involves H139. Substrate is bound at residue S162. Residue N215 is glycosylated (N-linked (GlcNAc...) asparagine). Residue H251 coordinates substrate. Ca(2+)-binding residues include D302 and N303. N-linked (GlcNAc...) asparagine glycans are attached at residues N356 and N497.

Belongs to the sulfatase family. It depends on Ca(2+) as a cofactor. In terms of processing, N-glycosylated. N-glycosylated with both high mannose and complex type sugars. Post-translationally, the conversion to 3-oxoalanine (also known as C-formylglycine, FGly), of a serine or cysteine residue in prokaryotes and of a cysteine residue in eukaryotes, is critical for catalytic activity. The 63-kDa precursor undergoes proteolytic processing in two steps, yielding two fragments in the first step (apparent molecular masses of 44 and 18 kDa). In the second step, the 44-kDa fragment is processed further to the 34- and 10-kDa chains. The 10-kDa chain is a cleavage product of the 44-kDa fragment but linked to the 18-kDa chain through a disulfide bridge. Widely expressed, with very low expression in brain, lung, heart and skeletal muscle.

The protein resides in the lysosome. The enzyme catalyses an aryl sulfate + H2O = a phenol + sulfate + H(+). It carries out the reaction Hydrolysis of the 3-sulfate groups of the N-sulfo-D-glucosamine 3-O-sulfate units of heparin.. With respect to regulation, inhibited by phosphate. The phosphate forms a covalent bond with the active site 3-oxoalanine. Functionally, displays arylsulfatase activity at acidic pH towards artificial substrates, such as p-nitrocatechol sulfate and also, but with a lower activity towards p-nitrophenyl sulfate and 4-methylumbelliferyl sulfate. Catalyzes the hydrolysis of the 3-sulfate groups of the N-sulfo-D-glucosamine 3-O-sulfate units of heparin. In Homo sapiens (Human), this protein is Arylsulfatase G (ARSG).